A 355-amino-acid polypeptide reads, in one-letter code: RNA 3'-terminal phosphate cyclase (355 aa).

ATP-binding positions include Gln-109 and 291–295; that span reads HLADQ. His-316 serves as the catalytic Tele-AMP-histidine intermediate.

It belongs to the RNA 3'-terminal cyclase family. Type 1 subfamily.

The protein localises to the cytoplasm. It catalyses the reaction a 3'-end 3'-phospho-ribonucleotide-RNA + ATP = a 3'-end 2',3'-cyclophospho-ribonucleotide-RNA + AMP + diphosphate. In terms of biological role, catalyzes the conversion of 3'-phosphate to a 2',3'-cyclic phosphodiester at the end of RNA. The mechanism of action of the enzyme occurs in 3 steps: (A) adenylation of the enzyme by ATP; (B) transfer of adenylate to an RNA-N3'P to produce RNA-N3'PP5'A; (C) and attack of the adjacent 2'-hydroxyl on the 3'-phosphorus in the diester linkage to produce the cyclic end product. The biological role of this enzyme is unknown but it is likely to function in some aspects of cellular RNA processing. The sequence is that of RNA 3'-terminal phosphate cyclase from Koribacter versatilis (strain Ellin345).